Reading from the N-terminus, the 691-residue chain is UvrABC system protein C (691 aa).

The GIY-YIG domain occupies 20 to 97 (STSGVYLWKD…IKKHTPRYNI (78 aa)). Residues 204-239 (DATVARLEKRMKRAVRQEAFEAAARIRDDIQAIRCI) enclose the UVR domain. Residues 662–691 (RSTTAPVREEYKEHEHDPQGESPGPGRKTD) are disordered. The segment covering 668-680 (VREEYKEHEHDPQ) has biased composition (basic and acidic residues).

Belongs to the UvrC family. In terms of assembly, interacts with UvrB in an incision complex.

The protein resides in the cytoplasm. Functionally, the UvrABC repair system catalyzes the recognition and processing of DNA lesions. UvrC both incises the 5' and 3' sides of the lesion. The N-terminal half is responsible for the 3' incision and the C-terminal half is responsible for the 5' incision. In Treponema pallidum (strain Nichols), this protein is UvrABC system protein C.